Here is a 208-residue protein sequence, read N- to C-terminus: Small ribosomal subunit protein uS4 (208 aa).

The region spanning 95–157 is the S4 RNA-binding domain; sequence RRIDNVVYRA…DSLKKLVRSN (63 aa).

Belongs to the universal ribosomal protein uS4 family. In terms of assembly, part of the 30S ribosomal subunit. Contacts protein S5. The interaction surface between S4 and S5 is involved in control of translational fidelity.

Its function is as follows. One of the primary rRNA binding proteins, it binds directly to 16S rRNA where it nucleates assembly of the body of the 30S subunit. In terms of biological role, with S5 and S12 plays an important role in translational accuracy. The sequence is that of Small ribosomal subunit protein uS4 from Borrelia hermsii (strain HS1 / DAH).